Here is a 59-residue protein sequence, read N- to C-terminus: Protein translocase subunit SecE (59 aa).

Residues 37 to 57 (LIVLLFVGLLAFLVQLAFSIL) form a helical membrane-spanning segment.

It belongs to the SecE/SEC61-gamma family. As to quaternary structure, component of the Sec protein translocase complex. Heterotrimer consisting of SecY (alpha), SecG (beta) and SecE (gamma) subunits. The heterotrimers can form oligomers, although 1 heterotrimer is thought to be able to translocate proteins. Interacts with the ribosome. May interact with SecDF, and other proteins may be involved.

It is found in the cell membrane. In terms of biological role, essential subunit of the Sec protein translocation channel SecYEG. Clamps together the 2 halves of SecY. May contact the channel plug during translocation. This Metallosphaera sedula (strain ATCC 51363 / DSM 5348 / JCM 9185 / NBRC 15509 / TH2) protein is Protein translocase subunit SecE.